The chain runs to 517 residues: Crotonobetaine/carnitine--CoA ligase (517 aa).

Belongs to the ATP-dependent AMP-binding enzyme family.

It carries out the reaction 4-(trimethylamino)butanoate + ATP + CoA = 4-(trimethylamino)butanoyl-CoA + AMP + diphosphate. The catalysed reaction is crotonobetaine + ATP + CoA = crotonobetainyl-CoA + AMP + diphosphate. The enzyme catalyses (R)-carnitine + ATP + CoA = (R)-carnitinyl-CoA + AMP + diphosphate. Its pathway is amine and polyamine metabolism; carnitine metabolism. Functionally, catalyzes the transfer of CoA to carnitine, generating the initial carnitinyl-CoA needed for the CaiB reaction cycle. Also has activity toward crotonobetaine and gamma-butyrobetaine. The sequence is that of Crotonobetaine/carnitine--CoA ligase from Escherichia coli (strain ATCC 8739 / DSM 1576 / NBRC 3972 / NCIMB 8545 / WDCM 00012 / Crooks).